Here is a 469-residue protein sequence, read N- to C-terminus: 3-isopropylmalate dehydratase large subunit (469 aa).

[4Fe-4S] cluster contacts are provided by Cys-349, Cys-409, and Cys-412.

This sequence belongs to the aconitase/IPM isomerase family. LeuC type 1 subfamily. Heterodimer of LeuC and LeuD. It depends on [4Fe-4S] cluster as a cofactor.

It catalyses the reaction (2R,3S)-3-isopropylmalate = (2S)-2-isopropylmalate. Its pathway is amino-acid biosynthesis; L-leucine biosynthesis; L-leucine from 3-methyl-2-oxobutanoate: step 2/4. Its function is as follows. Catalyzes the isomerization between 2-isopropylmalate and 3-isopropylmalate, via the formation of 2-isopropylmaleate. This chain is 3-isopropylmalate dehydratase large subunit, found in Methylorubrum populi (strain ATCC BAA-705 / NCIMB 13946 / BJ001) (Methylobacterium populi).